Reading from the N-terminus, the 528-residue chain is Peptide chain release factor 3 (528 aa).

A tr-type G domain is found at 11-279 (SDRRTFAIIS…GFVEWAPAPI (269 aa)). GTP contacts are provided by residues 20–27 (SHPDAGKT), 88–92 (DTPGH), and 142–145 (NKMD).

Belongs to the TRAFAC class translation factor GTPase superfamily. Classic translation factor GTPase family. PrfC subfamily.

Its subcellular location is the cytoplasm. Increases the formation of ribosomal termination complexes and stimulates activities of RF-1 and RF-2. It binds guanine nucleotides and has strong preference for UGA stop codons. It may interact directly with the ribosome. The stimulation of RF-1 and RF-2 is significantly reduced by GTP and GDP, but not by GMP. The chain is Peptide chain release factor 3 from Marinomonas sp. (strain MWYL1).